A 472-amino-acid polypeptide reads, in one-letter code: Adenosylhomocysteinase (472 aa).

Threonine 62, aspartate 137, and glutamate 197 together coordinate substrate. 198-200 (TTT) contacts NAD(+). Residues lysine 227 and aspartate 231 each contribute to the substrate site. Residues asparagine 232, 261-266 (GYGDVG), glutamate 284, asparagine 319, 340-342 (IGH), and asparagine 385 each bind NAD(+).

The protein belongs to the adenosylhomocysteinase family. Requires NAD(+) as cofactor.

It is found in the cytoplasm. It catalyses the reaction S-adenosyl-L-homocysteine + H2O = L-homocysteine + adenosine. Its pathway is amino-acid biosynthesis; L-homocysteine biosynthesis; L-homocysteine from S-adenosyl-L-homocysteine: step 1/1. Its function is as follows. May play a key role in the regulation of the intracellular concentration of adenosylhomocysteine. The chain is Adenosylhomocysteinase from Bordetella bronchiseptica (strain ATCC BAA-588 / NCTC 13252 / RB50) (Alcaligenes bronchisepticus).